A 1023-amino-acid chain; its full sequence is Vacuolar membrane protease (1023 aa).

The Cytoplasmic portion of the chain corresponds to Met-1–Lys-80. Positions Lys-17–Ser-48 are enriched in polar residues. The tract at residues Lys-17–Gln-59 is disordered. Residues Thr-81–Asp-101 traverse the membrane as a helical segment. The Vacuolar segment spans residues Ser-102–Ser-425. 2 N-linked (GlcNAc...) asparagine glycosylation sites follow: Asn-170 and Asn-200. 2 residues coordinate Zn(2+): His-214 and Asp-226. Glu-259 functions as the Proton acceptor in the catalytic mechanism. The Zn(2+) site is built by Glu-260, Glu-285, and His-357. A helical transmembrane segment spans residues Ala-426–Phe-446. The Cytoplasmic portion of the chain corresponds to Arg-447 to Lys-461. The chain crosses the membrane as a helical span at residues Tyr-462–Val-482. Over Pro-483 to Ser-491 the chain is Vacuolar. Asn-490 is a glycosylation site (N-linked (GlcNAc...) asparagine). Residues Ser-492–Leu-512 traverse the membrane as a helical segment. Over Asn-513 to Glu-529 the chain is Cytoplasmic. Residues Lys-530 to Val-550 form a helical membrane-spanning segment. At Lys-551–Glu-564 the chain is on the vacuolar side. The helical transmembrane segment at Leu-565–Trp-585 threads the bilayer. Over Cys-586 to Ser-643 the chain is Cytoplasmic. Polar residues predominate over residues Leu-604–Thr-613. Residues Leu-604–Leu-626 form a disordered region. The chain crosses the membrane as a helical span at residues Phe-644–Phe-664. Topologically, residues Asn-665–Leu-687 are vacuolar. Asn-675 is a glycosylation site (N-linked (GlcNAc...) asparagine). Residues Ile-688–Phe-708 traverse the membrane as a helical segment. Over Lys-709–Arg-712 the chain is Cytoplasmic. Residues Ile-713 to Asp-733 form a helical membrane-spanning segment. Over Ala-734–Val-1023 the chain is Vacuolar. 3 N-linked (GlcNAc...) asparagine glycosylation sites follow: Asn-815, Asn-858, and Asn-892.

It belongs to the peptidase M28 family. Zn(2+) serves as cofactor.

The protein resides in the vacuole membrane. May be involved in vacuolar sorting and osmoregulation. This Clavispora lusitaniae (strain ATCC 42720) (Yeast) protein is Vacuolar membrane protease.